Consider the following 101-residue polypeptide: Ribonuclease kappa-B (101 aa).

2 helical membrane-spanning segments follow: residues 13–33 and 68–88; these read ACGI…GVFF and VSYN…FSFC.

This sequence belongs to the RNase K family.

It is found in the membrane. Its function is as follows. Endoribonuclease which preferentially cleaves ApU and ApG phosphodiester bonds. The chain is Ribonuclease kappa-B (rnasek-b) from Xenopus laevis (African clawed frog).